The following is a 240-amino-acid chain: Probable transcriptional regulatory protein VFMJ11_A0186 (240 aa).

Belongs to the TACO1 family.

It localises to the cytoplasm. This is Probable transcriptional regulatory protein VFMJ11_A0186 from Aliivibrio fischeri (strain MJ11) (Vibrio fischeri).